We begin with the raw amino-acid sequence, 388 residues long: Fibrinogen- and Ig-binding protein (388 aa).

Residues M1–A41 form the signal peptide. 4 D repeats span residues E288–E293, A294–E299, A302–E307, and A309–D314. The disordered stretch occupies residues L308–T362. The span at P322–P332 shows a compositional bias: basic and acidic residues. Residues R334–T362 are compositionally biased toward polar residues. The LPXTG sorting signal motif lies at L354–G358. T357 carries the pentaglycyl murein peptidoglycan amidated threonine modification. A propeptide spans G358–N388 (removed by sortase).

It localises to the secreted. Its subcellular location is the cell wall. Its function is as follows. Binds IgG molecules of the Ig1, Ig2 and Ig4 subclasses, and also binds fibrinogen. This chain is Fibrinogen- and Ig-binding protein (mrp4), found in Streptococcus pyogenes.